Here is a 575-residue protein sequence, read N- to C-terminus: FAD-dependent monooxygenase rstn6 (575 aa).

Positions 1-17 are cleaved as a signal peptide; sequence MYDVIVIGAGWCGLVAA. Ile106 serves as a coordination point for FAD. 2 N-linked (GlcNAc...) asparagine glycosylation sites follow: Asn239 and Asn295.

The protein belongs to the FAD-binding monooxygenase family. Requires FAD as cofactor.

Its pathway is antifungal biosynthesis. Its function is as follows. FAD-dependent monooxygenase; part of the gene cluster that mediates the biosynthesis of the tetrahydropyranyl antifungal agent restricticin that acts as an inhibitor of CYP51 and blocks the ergosterol biosynthesis. The highly reducing polyketide synthase rstn3, the short chain dehydrogenase rstn4, the cyclase rstn5, the FAD-dependent monooxygenase rstn6 and the enoylreductase rstn7 are required to generate the first stable intermediate desmethylrestrictinol. Rstn3 with rstn7 biosynthesize the first polyketide chain intermediate that is reduced by rstn4, followed by epoxidation by rstn6 before 6-endo cyclization via epoxide opening by rstn5 leads to desmethylrestrictinol. The methyltransferase rstn1 then catalyzes the C4 O-methylation of desmethylrestrictinol to produce restrictinol, and the nonribosomal peptide synthetase rstn8 catalyzes the C3 esterification of restrictinol with glycine that leads to restricticin. In Aspergillus nomiae NRRL (strain ATCC 15546 / NRRL 13137 / CBS 260.88 / M93), this protein is FAD-dependent monooxygenase rstn6.